A 419-amino-acid chain; its full sequence is GTPase Obg (419 aa).

Positions 1–158 (MHFVDEAFNE…FKIKTELKVL (158 aa)) constitute an Obg domain. In terms of domain architecture, OBG-type G spans 159–324 (ADIGLLGFPS…LKYKMSSFLQ (166 aa)). Residues 165–172 (GFPSVGKS), 190–194 (FTTIK), 211–214 (DLPG), 278–281 (NKMD), and 305–307 (SLV) each bind GTP. Positions 172 and 192 each coordinate Mg(2+). In terms of domain architecture, OCT spans 342–419 (TLTDNLKTIS…KICDRLFDFL (78 aa)).

This sequence belongs to the TRAFAC class OBG-HflX-like GTPase superfamily. OBG GTPase family. As to quaternary structure, monomer. The cofactor is Mg(2+).

Its subcellular location is the cytoplasm. Functionally, an essential GTPase which binds GTP, GDP and possibly (p)ppGpp with moderate affinity, with high nucleotide exchange rates and a fairly low GTP hydrolysis rate. Plays a role in control of the cell cycle, stress response, ribosome biogenesis and in those bacteria that undergo differentiation, in morphogenesis control. This chain is GTPase Obg, found in Aster yellows witches'-broom phytoplasma (strain AYWB).